We begin with the raw amino-acid sequence, 217 residues long: Octanoyltransferase (217 aa).

The 176-residue stretch at 32 to 207 (NDSPDELWIV…TLSQLLGYQH (176 aa)) folds into the BPL/LPL catalytic domain. Residues 71–78 (RGGQVTYH), 138–140 (SLG), and 151–153 (GLA) contribute to the substrate site. Cys-169 (acyl-thioester intermediate) is an active-site residue.

The protein belongs to the LipB family.

The protein localises to the cytoplasm. The enzyme catalyses octanoyl-[ACP] + L-lysyl-[protein] = N(6)-octanoyl-L-lysyl-[protein] + holo-[ACP] + H(+). It functions in the pathway protein modification; protein lipoylation via endogenous pathway; protein N(6)-(lipoyl)lysine from octanoyl-[acyl-carrier-protein]: step 1/2. Its function is as follows. Catalyzes the transfer of endogenously produced octanoic acid from octanoyl-acyl-carrier-protein onto the lipoyl domains of lipoate-dependent enzymes. Lipoyl-ACP can also act as a substrate although octanoyl-ACP is likely to be the physiological substrate. This Shewanella oneidensis (strain ATCC 700550 / JCM 31522 / CIP 106686 / LMG 19005 / NCIMB 14063 / MR-1) protein is Octanoyltransferase.